Consider the following 227-residue polypeptide: UPF0758 protein CPF_2399 (227 aa).

Residues 105-227 enclose the MPN domain; that stretch reads KISKPSDVAK…FISLKEKDIL (123 aa). Positions 176, 178, and 189 each coordinate Zn(2+). Positions 176-189 match the JAMM motif motif; the sequence is HNHPSGDPTPSRDD.

The protein belongs to the UPF0758 family.

This is UPF0758 protein CPF_2399 from Clostridium perfringens (strain ATCC 13124 / DSM 756 / JCM 1290 / NCIMB 6125 / NCTC 8237 / Type A).